Reading from the N-terminus, the 1159-residue chain is WASH complex subunit 5 (1159 aa).

Residue serine 917 is modified to Phosphoserine.

The protein belongs to the strumpellin family. In terms of assembly, component of the WASH core complex also described as WASH regulatory complex (SHRC) composed of WASH (WASHC1, WASH2P or WASH3P), WASHC2 (WASHC2A or WASHC2C), WASHC3, WASHC4 and WASHC5. The WASH core complex associates via WASHC2 with the F-actin-capping protein dimer (formed by CAPZA1, CAPZA2 or CAPZA3 and CAPZB) in a transient or substoichiometric manner which was initially described as WASH complex. Interacts with VCP, PI4K2A. As to expression, expressed ubiquitously.

It is found in the cytoplasm. Its subcellular location is the cytosol. It localises to the endoplasmic reticulum. The protein localises to the early endosome. In terms of biological role, acts as a component of the WASH core complex that functions as a nucleation-promoting factor (NPF) at the surface of endosomes, where it recruits and activates the Arp2/3 complex to induce actin polymerization, playing a key role in the fission of tubules that serve as transport intermediates during endosome sorting. May be involved in axonal outgrowth. Involved in cellular localization of ADRB2. Involved in cellular trafficking of BLOC-1 complex cargos such as ATP7A and VAMP7. This Homo sapiens (Human) protein is WASH complex subunit 5.